A 261-amino-acid chain; its full sequence is MAHQAHAYHMVDPSPWPLTGAIGALFLTSGLAIWFHFQSVTLLTLGLILLLLTMYQWWRDIIREGTFQGHHTPPVQKGLRYGMILFITSEVFFFLGFFWAFYHSSLAPTPELGGCWPPTGITPLDPFEVPLLNTAVLLASGVTVTWAHHSLMEGARKQAIQALALTIILGVYFTALQAMEYYEAPFTIADGVYGSTFFVATGFHGLHVIIGSSFLAVCLLRQIQYHFTSEHHFGFEAAAWYWHFVDVVWLFLYVSIYWWGS.

Residues 1-15 (MAHQAHAYHMVDPSP) are Mitochondrial matrix-facing. Residues 16 to 34 (WPLTGAIGALFLTSGLAIW) form a helical membrane-spanning segment. Residues 35-40 (FHFQSV) are Mitochondrial intermembrane-facing. A helical membrane pass occupies residues 41 to 66 (TLLTLGLILLLLTMYQWWRDIIREGT). The Mitochondrial matrix portion of the chain corresponds to 67–72 (FQGHHT). Residues 73 to 105 (PPVQKGLRYGMILFITSEVFFFLGFFWAFYHSS) form a helical membrane-spanning segment. The Mitochondrial intermembrane segment spans residues 106–128 (LAPTPELGGCWPPTGITPLDPFE). Residues 129-152 (VPLLNTAVLLASGVTVTWAHHSLM) form a helical membrane-spanning segment. Residues 153 to 155 (EGA) lie on the Mitochondrial matrix side of the membrane. Residues 156-183 (RKQAIQALALTIILGVYFTALQAMEYYE) form a helical membrane-spanning segment. The Mitochondrial intermembrane portion of the chain corresponds to 184–190 (APFTIAD). The chain crosses the membrane as a helical span at residues 191–223 (GVYGSTFFVATGFHGLHVIIGSSFLAVCLLRQI). Residues 224–232 (QYHFTSEHH) are Mitochondrial matrix-facing. The helical transmembrane segment at 233–256 (FGFEAAAWYWHFVDVVWLFLYVSI) threads the bilayer. Residues 257–261 (YWWGS) lie on the Mitochondrial intermembrane side of the membrane.

This sequence belongs to the cytochrome c oxidase subunit 3 family. In terms of assembly, component of the cytochrome c oxidase (complex IV, CIV), a multisubunit enzyme composed of 14 subunits. The complex is composed of a catalytic core of 3 subunits MT-CO1, MT-CO2 and MT-CO3, encoded in the mitochondrial DNA, and 11 supernumerary subunits COX4I, COX5A, COX5B, COX6A, COX6B, COX6C, COX7A, COX7B, COX7C, COX8 and NDUFA4, which are encoded in the nuclear genome. The complex exists as a monomer or a dimer and forms supercomplexes (SCs) in the inner mitochondrial membrane with NADH-ubiquinone oxidoreductase (complex I, CI) and ubiquinol-cytochrome c oxidoreductase (cytochrome b-c1 complex, complex III, CIII), resulting in different assemblies (supercomplex SCI(1)III(2)IV(1) and megacomplex MCI(2)III(2)IV(2)).

It localises to the mitochondrion inner membrane. It catalyses the reaction 4 Fe(II)-[cytochrome c] + O2 + 8 H(+)(in) = 4 Fe(III)-[cytochrome c] + 2 H2O + 4 H(+)(out). Functionally, component of the cytochrome c oxidase, the last enzyme in the mitochondrial electron transport chain which drives oxidative phosphorylation. The respiratory chain contains 3 multisubunit complexes succinate dehydrogenase (complex II, CII), ubiquinol-cytochrome c oxidoreductase (cytochrome b-c1 complex, complex III, CIII) and cytochrome c oxidase (complex IV, CIV), that cooperate to transfer electrons derived from NADH and succinate to molecular oxygen, creating an electrochemical gradient over the inner membrane that drives transmembrane transport and the ATP synthase. Cytochrome c oxidase is the component of the respiratory chain that catalyzes the reduction of oxygen to water. Electrons originating from reduced cytochrome c in the intermembrane space (IMS) are transferred via the dinuclear copper A center (CU(A)) of subunit 2 and heme A of subunit 1 to the active site in subunit 1, a binuclear center (BNC) formed by heme A3 and copper B (CU(B)). The BNC reduces molecular oxygen to 2 water molecules using 4 electrons from cytochrome c in the IMS and 4 protons from the mitochondrial matrix. This Formosania lacustris (Oriental stream loach) protein is Cytochrome c oxidase subunit 3 (mt-co3).